A 160-amino-acid polypeptide reads, in one-letter code: Large ribosomal subunit protein eL29 (160 aa).

Over residues 1–26 the composition is skewed to basic residues; that stretch reads MAKSKNHTTHNQSRKWHRNGIKKPRS. The segment at 1–32 is disordered; that stretch reads MAKSKNHTTHNQSRKWHRNGIKKPRSQRYESL. Lys5 bears the N6-methyllysine mark. Phosphoserine is present on Ser31. An N6-acetyllysine modification is found at Lys33. Residues 119–160 form a disordered region; it reads CRPKSQAKAQSKAKATAGGTAAAPVPPASAPKGAQAPTKAPQ. Over residues 121–141 the composition is skewed to low complexity; that stretch reads PKSQAKAQSKAKATAGGTAAA.

The protein belongs to the eukaryotic ribosomal protein eL29 family. In terms of assembly, component of the large ribosomal subunit.

Its subcellular location is the cytoplasm. Its function is as follows. Component of the large ribosomal subunit. The ribosome is a large ribonucleoprotein complex responsible for the synthesis of proteins in the cell. This chain is Large ribosomal subunit protein eL29 (RPL29), found in Sus scrofa (Pig).